Consider the following 360-residue polypeptide: Protein Wnt-2 (360 aa).

Positions M1–S25 are cleaved as a signal peptide. Cystine bridges form between C76–C87, C127–C135, C137–C157, C206–C220, C208–C215, C278–C309, C294–C304, C308–C348, C324–C339, C326–C336, and C331–C332. The O-palmitoleoyl serine; by PORCN moiety is linked to residue S212. An N-linked (GlcNAc...) asparagine glycan is attached at N295.

It belongs to the Wnt family. Post-translationally, palmitoleoylation is required for efficient binding to frizzled receptors. Depalmitoleoylation leads to Wnt signaling pathway inhibition.

The protein localises to the secreted. It localises to the extracellular space. It is found in the extracellular matrix. Functionally, ligand for members of the frizzled family of seven transmembrane receptors. Functions in the canonical Wnt signaling pathway that results in activation of transcription factors of the TCF/LEF family. Functions as a upstream regulator of FGF10 expression. Plays an important role in embryonic lung development. May contribute to embryonic brain development by regulating the proliferation of dopaminergic precursors and neurons. This chain is Protein Wnt-2 (WNT2), found in Equus caballus (Horse).